The primary structure comprises 206 residues: Large ribosomal subunit protein uL4 (206 aa).

The tract at residues 47–77 (GTQSTKTRSEVRGGGIKPWRQKGTGRARQGS) is disordered.

It belongs to the universal ribosomal protein uL4 family. As to quaternary structure, part of the 50S ribosomal subunit.

In terms of biological role, one of the primary rRNA binding proteins, this protein initially binds near the 5'-end of the 23S rRNA. It is important during the early stages of 50S assembly. It makes multiple contacts with different domains of the 23S rRNA in the assembled 50S subunit and ribosome. Its function is as follows. Forms part of the polypeptide exit tunnel. This chain is Large ribosomal subunit protein uL4, found in Clostridium beijerinckii (strain ATCC 51743 / NCIMB 8052) (Clostridium acetobutylicum).